We begin with the raw amino-acid sequence, 498 residues long: WD repeat-containing protein 55 homolog (498 aa).

The interval 1–131 is disordered; the sequence is MHTHNNFKTP…ATFDLDEDDE (131 aa). Composition is skewed to acidic residues over residues 12–23 and 31–48; these read DEDELDDLDEDM and IEQEVLNESDSDNDEYDL. WD repeat units follow at residues 154–193, 198–237, 241–279, 282–321, 324–363, and 408–447; these read KLEDFITDICFHPDRDIIALATIIGDVHLYEYDNEANKLL, VHSKACRDVEFTEDGRFLLTCSKDKCVMVTDMETEKLKKL, AHDDAINTLHVLNENLFASGDDAGTVKLWDLRTKNAIFE, ELEDQITQLTTNEQSKLLLATSADGYLTTFNISARKMYVQ, PYEEELNCMGVYRGDSKLVVGTSKGRLYTYNWGQFGYHCD, and QHNMPIESLDVNASGELIASSSHNNDVRFWNVKYFEDFGE.

It belongs to the WD repeat WDR55 family.

This Drosophila simulans (Fruit fly) protein is WD repeat-containing protein 55 homolog.